A 456-amino-acid polypeptide reads, in one-letter code: MGLEWSSPGERQPLLYPGGPRAPRVFGRRWLVLLLFSLLAFLQGLVWNSWGPIQNSARTAYNFSGLDIALLVLWGPIGFLPCFLFMWLMDNRGLRVTVLLTALLMVLGAGLRCVPVQDLAVRRKLIHGGQLLNGFAGPTVMNAAPFLSTTWFSPDERATATAIASMLSYLGGACAFLVGPLVVPAPNSTSGLLLYSGSVGAIRDRIEAVMYAEFGIIFVVFAAILAYFPSRPPVPPSVAAASRRLSYRTSILRLLSNVRFLLIVLAYAIPLGFYAGWSGVLDLILTPVHVTQVDAGWVGFWSIVGGCVVGIAVGRFADSIRGVLKPILLLLFSGAALSSTWFTLTFLSNVTHLPLTTATLYTSCILIGVFLSGTVPIFFEMFVETVYPIPEGITCGVVTFLSNLFMGVLLLFLTLYQTNLSWLNWCLTGSCFLSLLFIACFRESYDRLYLDVFVSV.

Residues 1 to 29 (MGLEWSSPGERQPLLYPGGPRAPRVFGRR) are Cytoplasmic-facing. The Di-leucine motif; mediates lysosomal localization signature appears at 14–15 (LL). Residues 30–50 (WLVLLLFSLLAFLQGLVWNSW) traverse the membrane as a helical segment. Residues 51–67 (GPIQNSARTAYNFSGLD) lie on the Lumenal side of the membrane. An N-linked (GlcNAc...) asparagine glycan is attached at Asn-62. Residues 68–88 (IALLVLWGPIGFLPCFLFMWL) form a helical membrane-spanning segment. Over 89–95 (MDNRGLR) the chain is Cytoplasmic. Residues 96–116 (VTVLLTALLMVLGAGLRCVPV) traverse the membrane as a helical segment. The Lumenal portion of the chain corresponds to 117 to 131 (QDLAVRRKLIHGGQL). A helical membrane pass occupies residues 132–152 (LNGFAGPTVMNAAPFLSTTWF). At 153–162 (SPDERATATA) the chain is on the cytoplasmic side. Residues 163 to 183 (IASMLSYLGGACAFLVGPLVV) traverse the membrane as a helical segment. The Lumenal segment spans residues 184–207 (PAPNSTSGLLLYSGSVGAIRDRIE). N-linked (GlcNAc...) asparagine glycosylation occurs at Asn-187. A helical transmembrane segment spans residues 208 to 228 (AVMYAEFGIIFVVFAAILAYF). The Cytoplasmic portion of the chain corresponds to 229 to 259 (PSRPPVPPSVAAASRRLSYRTSILRLLSNVR). A helical transmembrane segment spans residues 260 to 280 (FLLIVLAYAIPLGFYAGWSGV). Residues 281–292 (LDLILTPVHVTQ) are Lumenal-facing. Residues 293–313 (VDAGWVGFWSIVGGCVVGIAV) form a helical membrane-spanning segment. Residues 314–326 (GRFADSIRGVLKP) lie on the Cytoplasmic side of the membrane. Residues 327-347 (ILLLLFSGAALSSTWFTLTFL) form a helical membrane-spanning segment. Residues 348 to 362 (SNVTHLPLTTATLYT) lie on the Lumenal side of the membrane. A glycan (N-linked (GlcNAc...) asparagine) is linked at Asn-349. A helical membrane pass occupies residues 363–383 (SCILIGVFLSGTVPIFFEMFV). At 384–392 (ETVYPIPEG) the chain is on the cytoplasmic side. Residues 393–413 (ITCGVVTFLSNLFMGVLLLFL) traverse the membrane as a helical segment. At 414–420 (TLYQTNL) the chain is on the lumenal side. A glycan (N-linked (GlcNAc...) asparagine) is linked at Asn-419. The chain crosses the membrane as a helical span at residues 421–441 (SWLNWCLTGSCFLSLLFIACF). The Cytoplasmic segment spans residues 442–456 (RESYDRLYLDVFVSV).

The protein belongs to the major facilitator superfamily.

The protein localises to the lysosome membrane. It carries out the reaction pyridoxine(out) + n H(+)(out) = pyridoxine(in) + n H(+)(in). Mediates H(+)-dependent pyridoxine transport. The polypeptide is Solute carrier family 49 member 4 homolog (slc49a4) (Xenopus tropicalis (Western clawed frog)).